A 202-amino-acid polypeptide reads, in one-letter code: uncharacterized protein (202 aa).

Belongs to the dienelactone hydrolase family.

This is an uncharacterized protein from Bacillus subtilis (strain 168).